The following is a 288-amino-acid chain: Phosphatidylserine decarboxylase proenzyme (288 aa).

Active-site charge relay system; for autoendoproteolytic cleavage activity residues include Asp88, His145, and Ser248. Ser248 functions as the Schiff-base intermediate with substrate; via pyruvic acid; for decarboxylase activity in the catalytic mechanism. Ser248 is modified (pyruvic acid (Ser); by autocatalysis).

The protein belongs to the phosphatidylserine decarboxylase family. PSD-B subfamily. Prokaryotic type I sub-subfamily. Heterodimer of a large membrane-associated beta subunit and a small pyruvoyl-containing alpha subunit. Pyruvate serves as cofactor. Is synthesized initially as an inactive proenzyme. Formation of the active enzyme involves a self-maturation process in which the active site pyruvoyl group is generated from an internal serine residue via an autocatalytic post-translational modification. Two non-identical subunits are generated from the proenzyme in this reaction, and the pyruvate is formed at the N-terminus of the alpha chain, which is derived from the carboxyl end of the proenzyme. The autoendoproteolytic cleavage occurs by a canonical serine protease mechanism, in which the side chain hydroxyl group of the serine supplies its oxygen atom to form the C-terminus of the beta chain, while the remainder of the serine residue undergoes an oxidative deamination to produce ammonia and the pyruvoyl prosthetic group on the alpha chain. During this reaction, the Ser that is part of the protease active site of the proenzyme becomes the pyruvoyl prosthetic group, which constitutes an essential element of the active site of the mature decarboxylase.

The protein localises to the cell membrane. The enzyme catalyses a 1,2-diacyl-sn-glycero-3-phospho-L-serine + H(+) = a 1,2-diacyl-sn-glycero-3-phosphoethanolamine + CO2. It participates in phospholipid metabolism; phosphatidylethanolamine biosynthesis; phosphatidylethanolamine from CDP-diacylglycerol: step 2/2. Its function is as follows. Catalyzes the formation of phosphatidylethanolamine (PtdEtn) from phosphatidylserine (PtdSer). In Azoarcus sp. (strain BH72), this protein is Phosphatidylserine decarboxylase proenzyme.